Reading from the N-terminus, the 294-residue chain is Nucleophosmin (294 aa).

Over residues 121–133 (LEEEPESEDEEED) the composition is skewed to acidic residues. Positions 121 to 244 (LEEEPESEDE…PKTPKVPLSL (124 aa)) are disordered. The short motif at 153 to 158 (PQKKPK) is the Nuclear localization signal element. The segment covering 161–186 (EDDEDDDEDEDDDEDDEDDLDDDEEE) has biased composition (acidic residues). Positions 190-196 (PMKKPAR) match the Nuclear localization signal motif. A compositionally biased stretch (basic and acidic residues) spans 223–233 (KTPDSKKDKSL).

Belongs to the nucleoplasmin family. As to quaternary structure, decamer formed by two pentameric rings associated in a head-to-head fashion. In terms of processing, phosphorylated.

Its subcellular location is the cytoplasm. The protein resides in the nucleus. It localises to the nucleoplasm. The protein localises to the nucleolus. Functionally, acts as a chaperonin for the core histones H3, H2B and H4. Associated with nucleolar ribonucleoprotein structures and bind single-stranded nucleic acids. It may function in the assembly and/or transport of ribosome. May stimulate endonuclease activity on apurinic/apyrimidinic (AP) double-stranded DNA. May inhibit endonuclease activity on AP single-stranded RNA. The polypeptide is Nucleophosmin (NPM1) (Gallus gallus (Chicken)).